Reading from the N-terminus, the 657-residue chain is Probable cytochrome P450 556A1 (657 aa).

The helical transmembrane segment at 2-24 threads the bilayer; the sequence is FLTSILYTIIIILIFYKGLEYLI. A disordered region spans residues 440 to 486; the sequence is RSLPSINNNNNNNNNNNNNNNNNNNNNNNNNSNNNSINGNNKNNNRN. The segment covering 446–486 has biased composition (low complexity); that stretch reads NNNNNNNNNNNNNNNNNNNNNNNNNSNNNSINGNNKNNNRN. Cys-587 is a binding site for heme.

Belongs to the cytochrome P450 family. The cofactor is heme.

The protein resides in the membrane. This chain is Probable cytochrome P450 556A1 (cyp556A1), found in Dictyostelium discoideum (Social amoeba).